Reading from the N-terminus, the 313-residue chain is Olfactory receptor 10K1 (313 aa).

Over 1 to 25 the chain is Extracellular; the sequence is MEQVNKTVVREFVVLGFSSLARLQQ. N5 is a glycosylation site (N-linked (GlcNAc...) asparagine). Residues 26–46 form a helical membrane-spanning segment; it reads LLFVIFLLLYLFTLGTNAIII. Residues 47–54 are Cytoplasmic-facing; sequence STIVLDRA. The chain crosses the membrane as a helical span at residues 55 to 75; sequence LHTPMYFFLAILSCSEICYTF. Residues 76-99 are Extracellular-facing; sequence VIVPKMLVDLLSQKKTISFLGCAI. Residues 100–120 form a helical membrane-spanning segment; sequence QMFSFLFFGSSHSFLLAAMGY. Residues 121 to 139 lie on the Cytoplasmic side of the membrane; it reads DRYMAICNPLRYSVLMGHG. The helical transmembrane segment at 140 to 160 threads the bilayer; that stretch reads VCMGLMAAACACGFTVSLVTT. Residues 161–197 lie on the Extracellular side of the membrane; sequence SLVFHLPFHSSNQLHHFFCDISPVLKLASQHSGFSQL. Residues 198 to 217 traverse the membrane as a helical segment; it reads VIFMLGVFALVIPLLLILVS. At 218 to 237 the chain is on the cytoplasmic side; that stretch reads YIRIISAILKIPSSVGRYKT. Residues 238–258 form a helical membrane-spanning segment; it reads FSTCASHLIVVTVHYSCASFI. The Extracellular segment spans residues 259–271; sequence YLRPKTNYTSSQD. Residue N265 is glycosylated (N-linked (GlcNAc...) asparagine). Residues 272 to 292 form a helical membrane-spanning segment; it reads TLISVSYTILTPLFNPMIYSL. Residues 293 to 313 lie on the Cytoplasmic side of the membrane; it reads RNKEFKSALRRTIGQTFYPLS.

It belongs to the G-protein coupled receptor 1 family.

It localises to the cell membrane. Functionally, odorant receptor. This is Olfactory receptor 10K1 (OR10K1) from Homo sapiens (Human).